Reading from the N-terminus, the 176-residue chain is Large ribosomal subunit protein uL10 (176 aa).

The protein belongs to the universal ribosomal protein uL10 family. As to quaternary structure, part of the ribosomal stalk of the 50S ribosomal subunit. The N-terminus interacts with L11 and the large rRNA to form the base of the stalk. The C-terminus forms an elongated spine to which L12 dimers bind in a sequential fashion forming a multimeric L10(L12)X complex.

Its function is as follows. Forms part of the ribosomal stalk, playing a central role in the interaction of the ribosome with GTP-bound translation factors. The protein is Large ribosomal subunit protein uL10 of Streptomyces avermitilis (strain ATCC 31267 / DSM 46492 / JCM 5070 / NBRC 14893 / NCIMB 12804 / NRRL 8165 / MA-4680).